A 1779-amino-acid polypeptide reads, in one-letter code: MAENVQNPPVEPLAVIGMSCRFAPDLDTPGRLWEFLRAGGSAVGEMPDRRWDPYVTDSRTRDILRTTTRKGSFMRDIEGFDAEFFQITPREAEYIDPQQRIMLELAWEALCDAGLPPTSLAGTDASVYVAANSNDYGRRLLEDLDRTGAWAVNGTTFYGIANRISYFLDAHGPSMAVDTACAGSLTALHVAGQALHRGETSVAIVGGINIMASPALVVALDAASATSPDGRSKSFDKAADGYGRGEGGGVVVLKRLSDAVRDGDPVHGLVLASGVFQDGRSDGMMAPNGSAQQRMLEEIYRRSGIDPGTVQYVEAHGTGTQLGDAAEAQAIGNVFGPGRDGDNPLLIGTLKPNVGHVEAASGIAGVIKVLLGMRHGELPPSPHEEPDPGLGLEARGLRLVAEPTPWPRGEHGMRAGVSSYGVGGSIAHAVLQQAPPRPDRTERPAAAATGRPQVFPLSAASEQGVRGLAGSVAAWLRAHPETALDDLAHTFTARRSHLSRRAAVVAGTTEELLGGLDALAGGEKSPAVALASASGFGDGGAAGPAWVFSGHGAQWSGMGRELLTTEPVFAQVIDELAPVFSEELGWTPREAIEAGGPWTVVRTQAMTFAMQVALAEVWSDLGLRPGAIIGHSVGEIAAAAVAGSLDRAEAARFACRRARALGKIAGRGAMAMVPMAFADVEQRVAGRDAVVAAIAASPLSTVVSGDTAAVEALLADLEADGIQARRVNTDVAFHSPHVQEILDEVRQAAAALRAGTPRVTLYSTALADPRSDAPREGEYWATNLADPVRFHQAVRAALDDGTRVFLEVSSHPVVAHSITETALDAGVPDAHVAITLRREQPEQRTVLANLARLHSLGTPVTWSYDGDLVDVPAVRWQHKPYWIFPDTAPEQGAGLGHDPQTHTLIGARTTVASAPVQRVWQTELHMENRPYAQSHKVVGVETVPASVVLNSFITAATNEGERACGLRDIVFRIPLAAHPTRVVQVVLEQDKVRIASRIKRDQESGGVRDDEWLTHTTATVVHEPEVGARPMEDPDVIRARCPVSWTWAKVDGIFRTMGVDGYTFPWVVEELLRGEDEQFSTITVDHTPKLHPSSWTAVVDAALTASGVLVMDENSNVLRTCSHLESLSFVGPPPPRIHVHTVRDPRTPDTISMTVADESGAVVCEARGLRYVKVQDIGSGAVGPRDLVHELAWEPVEVPADAPVPSQALVVGGAAGGPALVEALTARGVRARAVPDATAIGDASLTCADVVVVAPEALLPGEAPEQAARRCAQLLVDAVQQVAAVPDERRRPRVWALTREVRAGATEAALAHAPLWGAGRIVAGERPDLWGGVIDVAENAVPQQVASLIGALPHTEDVLSLDSEGVTAARLRQVARPAEREPVDCRPDGTYLVTGGLGALGLEAARHLVEQGARRLVLIGRRGLPSRSRWDQVDDPAVAAQIAEVVALEAAGATVRVLSLDISDAEATARALDPGALDMPPVRGIVHCAGVVSDALVEKTGAANLDTTMGPKADGAMVLHRLFPAGTLDFFTMFSSCGQLARLTGQVSYASANSFLDALAALRRSRGETGTTSFAWAQWIGRGMGETTGRATILEAESRGLGGITVSEALRSWAYADRFALPYAAVMRVMPDHTLPVFSHLSVTDAGAQSADAGGVDWATVPAGELPELVLKVTHEQVAAELNLAVDDIAIDQPLLELGVDSVLTVALRVRLHRCFAVDLPPTILWSNPTVRALAEFLAAEVGGATADAEETDPVAGLPAPQQGSGTAEQLDAVAAAAG.

The 424-residue stretch at 10–433 (VEPLAVIGMS…GSIAHAVLQQ (424 aa)) folds into the Ketosynthase family 3 (KS3) domain. Active-site for beta-ketoacyl synthase activity residues include C181, H316, and H356. Residues 902 to 1027 (HTLIGARTTV…ATVVHEPEVG (126 aa)) are N-terminal hotdog fold. The region spanning 902-1180 (HTLIGARTTV…YVKVQDIGSG (279 aa)) is the PKS/mFAS DH domain. A C-terminal hotdog fold region spans residues 1042 to 1180 (PVSWTWAKVD…YVKVQDIGSG (139 aa)). The 79-residue stretch at 1664 to 1742 (GELPELVLKV…ALAEFLAAEV (79 aa)) folds into the Carrier domain. S1702 is modified (O-(pantetheine 4'-phosphoryl)serine). The interval 1746 to 1771 (TADAEETDPVAGLPAPQQGSGTAEQL) is disordered.

The enzyme catalyses 5 malonyl-CoA + acetyl-CoA + 3 NADPH + 7 H(+) = 5-methyl-1-naphthoate + 5 CO2 + 3 NADP(+) + 6 CoA + 4 H2O. Its pathway is antibiotic biosynthesis. Its function is as follows. Polyketide synthase that catalyzes the biosynthesis of the bicyclic aromatic compound 5-methyl-1-naphthoate in the biosynthesis of the antitumor antibiotic azinomycin B. This Streptomyces sahachiroi protein is 5-methyl-1-naphthoate synthase.